A 200-amino-acid polypeptide reads, in one-letter code: Putative HMP/thiamine-binding protein YkoF (200 aa).

2 residues coordinate thiamine: Leu17 and Thr49.

In terms of assembly, homodimer in vitro. In vivo, may be a part of an ABC transporter complex which is composed of two ATP-binding proteins (YkoD), two transmembrane proteins (YkoC and YkoE) and a solute-binding protein (YkoF).

Part of the ABC transporter complex YkoCDEF that could transport hydroxymethylpyrimidine (HMP) and/or thiamine. Could also transport other HMP-containing products. Binds thiamine via its HMP moiety. The sequence is that of Putative HMP/thiamine-binding protein YkoF (ykoF) from Bacillus subtilis (strain 168).